Reading from the N-terminus, the 827-residue chain is Striatin homolog (827 aa).

The stretch at 37–109 forms a coiled coil; the sequence is RAHWISEKAE…VEEEEEEDDK (73 aa). Disordered stretches follow at residues 99 to 123, 181 to 270, 311 to 362, and 400 to 459; these read KVEEEEEEDDKIPKNREPPKKSKDN, KDIN…QLQS, SSVS…DEQS, and EEGN…SELM. Basic and acidic residues predominate over residues 109 to 123; the sequence is KIPKNREPPKKSKDN. 2 stretches are compositionally biased toward low complexity: residues 184 to 270 and 311 to 334; these read NNNN…QLQS and SSVSSNSGNNSINSSSDSLDTSKQ. Over residues 337-346 the composition is skewed to polar residues; that stretch reads EDPNNVTISK. Composition is skewed to low complexity over residues 347–356, 416–432, and 439–453; these read QQQQEQQQQQ, TPTTKSSSSSSSSSTGS, and SSSSSSGSSSSNSNT. WD repeat units follow at residues 495–534, 548–593, 610–649, 709–748, 751–790, and 797–827; these read SHFDGVRSIQFHPNEPIMISASEDNSIKVWNLNHLVPTKK, GHTG…IDSY, GHQDGIWDLLSIPNTPNLLSSSADGTVSLWNTTTSEQLYT, NNNSQINKIVSHPFMPLAMTGSEDHKIEFFDLNSNTVVHS, AHSNSISSLTIDPSGLYIASCAHDSSIRFWDISSKTCIQD, and KYDESIHCIKYHPNKGYFASGGADSVIRILN.

Belongs to the WD repeat striatin family. In terms of assembly, part of the core of STRIPAK complexes.

It is found in the cytoplasm. The protein resides in the membrane. In terms of biological role, calmodulin-binding scaffolding protein which is the center of the striatin-interacting phosphatase and kinase (STRIPAK) complexes. STRIPAK complexes have critical roles in protein (de)phosphorylation and are regulators of multiple signaling pathways including Hippo, MAPK, nuclear receptor and cytoskeleton remodeling. Different types of STRIPAK complexes are involved in a variety of biological processes such as cell growth, differentiation, apoptosis, metabolism and immune regulation. In Dictyostelium discoideum (Social amoeba), this protein is Striatin homolog (strn).